Reading from the N-terminus, the 689-residue chain is Long-chain-fatty-acid--CoA ligase 2 (689 aa).

252–263 (YTSGSTGKPKGV) is a binding site for ATP. Residues 518–567 (DGWFKTGDVGEIAKGNTLRLIDRKKNIVKSLNGEYIALEKIEAQFFTSPL) carry the FACS motif.

Belongs to the ATP-dependent AMP-binding enzyme family. The cofactor is Mg(2+).

It is found in the golgi apparatus. Its subcellular location is the vacuole membrane. It catalyses the reaction a long-chain fatty acid + ATP + CoA = a long-chain fatty acyl-CoA + AMP + diphosphate. Its function is as follows. Esterification, concomitant with transport, of endogenous long-chain fatty acids into metabolically active CoA thioesters for subsequent degradation or incorporation into phospholipids. Plays an important role in the determination of viability in the stationary phase. In Schizosaccharomyces pombe (strain 972 / ATCC 24843) (Fission yeast), this protein is Long-chain-fatty-acid--CoA ligase 2 (lcf2).